We begin with the raw amino-acid sequence, 131 residues long: Small ribosomal subunit protein uS8 (131 aa).

Belongs to the universal ribosomal protein uS8 family. As to quaternary structure, part of the 30S ribosomal subunit. Contacts proteins S5 and S12.

Its function is as follows. One of the primary rRNA binding proteins, it binds directly to 16S rRNA central domain where it helps coordinate assembly of the platform of the 30S subunit. This is Small ribosomal subunit protein uS8 from Paraburkholderia xenovorans (strain LB400).